A 295-amino-acid chain; its full sequence is Mycothiol acetyltransferase (295 aa).

Position 30 (Glu30) interacts with 1D-myo-inositol 2-(L-cysteinylamino)-2-deoxy-alpha-D-glucopyranoside. Position 62 to 64 (62 to 64 (LVV)) interacts with acetyl-CoA. The region spanning 137 to 295 (VTVRAFRADS…DDDTHVQYRR (159 aa)) is the N-acetyltransferase domain. Residues Glu165, Lys209, and Glu227 each coordinate 1D-myo-inositol 2-(L-cysteinylamino)-2-deoxy-alpha-D-glucopyranoside. Acetyl-CoA-binding positions include 231 to 233 (VGI) and 238 to 244 (QGRGLGK). Tyr265 contacts 1D-myo-inositol 2-(L-cysteinylamino)-2-deoxy-alpha-D-glucopyranoside.

This sequence belongs to the acetyltransferase family. MshD subfamily. In terms of assembly, monomer.

It catalyses the reaction 1D-myo-inositol 2-(L-cysteinylamino)-2-deoxy-alpha-D-glucopyranoside + acetyl-CoA = mycothiol + CoA + H(+). Functionally, catalyzes the transfer of acetyl from acetyl-CoA to desacetylmycothiol (Cys-GlcN-Ins) to form mycothiol. The chain is Mycothiol acetyltransferase from Nocardioides sp. (strain ATCC BAA-499 / JS614).